The sequence spans 414 residues: Clusterin-associated protein 1 (414 aa).

Positions 198–291 (KTKDLLNNVA…ERFEEAKNTL (94 aa)) form a coiled coil. The interval 305–414 (LLKSGSNDDS…EPLDESDNDF (110 aa)) is disordered. Acidic residues-rich tracts occupy residues 312–328 (DDSD…DSEL) and 360–389 (DSDD…EDES). Phosphoserine occurs at positions 314, 324, and 326. Residue Ser410 is modified to Phosphoserine.

The protein belongs to the CLUAP1 family. In terms of assembly, interacts with CLU/clusterin. Interacts with UBXN10; the interaction is direct.

It localises to the cell projection. The protein localises to the cilium. The protein resides in the nucleus. Required for cilia biogenesis. Appears to function within the multiple intraflagellar transport complex B (IFT-B). Key regulator of hedgehog signaling. The polypeptide is Clusterin-associated protein 1 (CLUAP1) (Macaca fascicularis (Crab-eating macaque)).